The primary structure comprises 260 residues: 3-oxoadipate CoA-transferase subunit B (260 aa).

The active site involves Glu-51.

This sequence belongs to the 3-oxoacid CoA-transferase subunit B family. As to quaternary structure, heterotetramer composed of 2 A and 2 B subunits.

It carries out the reaction 3-oxoadipate + succinyl-CoA = 3-oxoadipyl-CoA + succinate. The protein operates within aromatic compound metabolism; beta-ketoadipate pathway; acetyl-CoA and succinyl-CoA from 3-oxoadipate: step 1/2. This Pseudomonas knackmussii (strain DSM 6978 / CCUG 54928 / LMG 23759 / B13) protein is 3-oxoadipate CoA-transferase subunit B (catJ).